The chain runs to 488 residues: Proline--tRNA ligase (488 aa).

The protein belongs to the class-II aminoacyl-tRNA synthetase family. ProS type 3 subfamily. As to quaternary structure, homodimer.

The protein resides in the cytoplasm. It catalyses the reaction tRNA(Pro) + L-proline + ATP = L-prolyl-tRNA(Pro) + AMP + diphosphate. Its function is as follows. Catalyzes the attachment of proline to tRNA(Pro) in a two-step reaction: proline is first activated by ATP to form Pro-AMP and then transferred to the acceptor end of tRNA(Pro). This Pyrobaculum arsenaticum (strain DSM 13514 / JCM 11321 / PZ6) protein is Proline--tRNA ligase.